The chain runs to 349 residues: Probable L-asparaginase periplasmic (349 aa).

The first 21 residues, 1–21 (MKLTKLALCTLFGLGVSIANA), serve as a signal peptide directing secretion. The region spanning 25 to 349 (PNITILATGG…KVIQQYFEDF (325 aa)) is the Asparaginase/glutaminase domain. Thr-35 acts as the O-isoaspartyl threonine intermediate in catalysis. Residues Ser-81 and 112 to 113 (TD) contribute to the substrate site. A disulfide bridge links Cys-100 with Cys-128.

The protein belongs to the asparaginase 1 family.

Its subcellular location is the periplasm. The enzyme catalyses L-asparagine + H2O = L-aspartate + NH4(+). The protein is Probable L-asparaginase periplasmic (ansB) of Haemophilus influenzae (strain ATCC 51907 / DSM 11121 / KW20 / Rd).